Reading from the N-terminus, the 273-residue chain is NAD-dependent protein deacetylase 2 (273 aa).

A Deacetylase sirtuin-type domain is found at 1-273 (MSNAPLANQS…RCEAALAFLL (273 aa)). Residues 26 to 46 (GAGCSTNSGIPDYRDSHGNWK) and 104 to 107 (QNVD) each bind NAD(+). Residue His122 is the Proton acceptor of the active site. Positions 130, 133, 181, and 184 each coordinate Zn(2+). Residues 221 to 223 (GSS), 247 to 249 (NLG), and Cys265 each bind NAD(+).

The protein belongs to the sirtuin family. Class II subfamily. Zn(2+) serves as cofactor.

It localises to the cytoplasm. It carries out the reaction N(6)-acetyl-L-lysyl-[protein] + NAD(+) + H2O = 2''-O-acetyl-ADP-D-ribose + nicotinamide + L-lysyl-[protein]. NAD-dependent protein deacetylase which modulates the activities of several enzymes which are inactive in their acetylated form. This chain is NAD-dependent protein deacetylase 2, found in Bradyrhizobium diazoefficiens (strain JCM 10833 / BCRC 13528 / IAM 13628 / NBRC 14792 / USDA 110).